Reading from the N-terminus, the 427-residue chain is Glutamate-1-semialdehyde 2,1-aminomutase (427 aa).

Lys267 carries the N6-(pyridoxal phosphate)lysine modification.

It belongs to the class-III pyridoxal-phosphate-dependent aminotransferase family. HemL subfamily. Homodimer. Requires pyridoxal 5'-phosphate as cofactor.

The protein localises to the cytoplasm. The catalysed reaction is (S)-4-amino-5-oxopentanoate = 5-aminolevulinate. It functions in the pathway porphyrin-containing compound metabolism; protoporphyrin-IX biosynthesis; 5-aminolevulinate from L-glutamyl-tRNA(Glu): step 2/2. This Geotalea uraniireducens (strain Rf4) (Geobacter uraniireducens) protein is Glutamate-1-semialdehyde 2,1-aminomutase.